Consider the following 303-residue polypeptide: Methionyl-tRNA formyltransferase (303 aa).

Serine 109–proline 112 contributes to the (6S)-5,6,7,8-tetrahydrofolate binding site.

Belongs to the Fmt family.

The catalysed reaction is L-methionyl-tRNA(fMet) + (6R)-10-formyltetrahydrofolate = N-formyl-L-methionyl-tRNA(fMet) + (6S)-5,6,7,8-tetrahydrofolate + H(+). Attaches a formyl group to the free amino group of methionyl-tRNA(fMet). The formyl group appears to play a dual role in the initiator identity of N-formylmethionyl-tRNA by promoting its recognition by IF2 and preventing the misappropriation of this tRNA by the elongation apparatus. This chain is Methionyl-tRNA formyltransferase, found in Helicobacter pylori (strain ATCC 700392 / 26695) (Campylobacter pylori).